We begin with the raw amino-acid sequence, 487 residues long: Phenylalanine--tRNA ligase alpha subunit (487 aa).

L-phenylalanine is bound by residues T319, 361-363, and Y401; that span reads QVE. E403 provides a ligand contact to Mg(2+). An L-phenylalanine-binding site is contributed by F427.

It belongs to the class-II aminoacyl-tRNA synthetase family. Phe-tRNA synthetase alpha subunit type 2 subfamily. As to quaternary structure, tetramer of two alpha and two beta subunits. Mg(2+) serves as cofactor.

Its subcellular location is the cytoplasm. The enzyme catalyses tRNA(Phe) + L-phenylalanine + ATP = L-phenylalanyl-tRNA(Phe) + AMP + diphosphate + H(+). This is Phenylalanine--tRNA ligase alpha subunit (phesA) from Dictyostelium discoideum (Social amoeba).